The following is a 656-amino-acid chain: MEELDGEPTVTLIPGVNSKKNQMYFDWGPGEMLVCETSFNKKEKSEMVPSCPFIYIIRKDVDVYSQILRKLFNESHGIFLGLQRIDEELTGKSRKSQLVRVSKNYRSVIRACMEEMHQVAIAAKDPANGRQFSSQVSILSAMELIWNLCEILFIEVAPAGPLLLHLLDWVRLHVCEVDSLSADVLGSENPSKHDSFWNLVTILVLQGRLDEARQMLSKEADASPASAGICRIMGDLMRTMPILSPGNTQTLTELELKWQHWHEECERYLQDSTFATSPHLESLLKIMLGDEAALLEQKELLSNWYHFLVTRLLYSNPTVKPIDLHYYAQSSLDLFLGGESSPEPLDNILLAAFEFDIHQVIKECSIALSNWWFVAHLTDLLDHCKLLQSHNLYFGSNMREFLLLEYASGLFAHPSLWQLGVDYFDYCPELGRVSLELHIERIPLNTEQKALKVLRICEQRQMTEQVRSICKILAMKAVRNNRLGSALSWSIRAKDAAFATLVSDRFLRDYCERGCFSDLDLIDNLGPAMMLSDRLTFLGKYREFHRMYGEKRFADAASLLLSLMTSRIAPRSFWMTLLTDALPLLEQKQVIFSAEQTYELMRCLEDLTSRRPVHGESDTEQLQDDDIETTKVEMLRLSLARNLARAIIREGSLEGS.

M1 is subject to N-acetylmethionine. The residue at position 92 (K92) is an N6-acetyllysine. Phosphoserine is present on S223.

This sequence belongs to the nucleoporin Nup85 family. As to quaternary structure, component of the nuclear pore complex (NPC). Component of the NPC Nup107-160 subcomplex, consisting of at least NUP107, NUP98/Nup96, NUP160, NUP133, NUP85, NUP37, NUP43 and SEC13. Interacts with NUP160, NUP133 and SEC13. Interacts with NUP37, NUP107 and NUP43. Interacts with CCR2.

It is found in the nucleus. It localises to the nuclear pore complex. Its subcellular location is the chromosome. The protein resides in the centromere. The protein localises to the kinetochore. It is found in the cytoplasm. It localises to the cytoskeleton. Its subcellular location is the spindle. The protein resides in the nucleus membrane. Its function is as follows. Essential component of the nuclear pore complex (NPC) that seems to be required for NPC assembly and maintenance. As part of the NPC Nup107-160 subcomplex plays a role in RNA export and in tethering NUP96/Nup98 and NUP153 to the nucleus. The Nup107-160 complex seems to be required for spindle assembly during mitosis. NUP85 is required for membrane clustering of CCL2-activated CCR2. Seems to be involved in CCR2-mediated chemotaxis of monocytes and may link activated CCR2 to the phosphatidyl-inositol 3-kinase-Rac-lammellipodium protrusion cascade. Involved in nephrogenesis. The polypeptide is Nuclear pore complex protein Nup85 (NUP85) (Homo sapiens (Human)).